Consider the following 360-residue polypeptide: G-protein coupled receptor 15 (360 aa).

The Extracellular segment spans residues 1 to 33 (MDPEETSVYLDYYYATSPNPDIRETHSHVPYTS). A helical transmembrane segment spans residues 34-54 (VFLPVFYTAVFLTGVLGNLVL). Over 55–69 (MGALHFKPGSRRLID) the chain is Cytoplasmic. The helical transmembrane segment at 70–90 (IFIINLAASDFIFLVTLPLWV) threads the bilayer. The Extracellular segment spans residues 91–120 (DKEASLGLWRTGSFLCKGSSYMISVNMHCS). A helical membrane pass occupies residues 121-141 (VFLLTCMSVDRYLAIVCPVVS). Residues 142 to 149 (RKFRRTDC) lie on the Cytoplasmic side of the membrane. The helical transmembrane segment at 150 to 170 (AYVVCASIWFISCLLGLPTLL) threads the bilayer. Residues 171–192 (SRELTLIDDKPYCAEKKATPLK) lie on the Extracellular side of the membrane. Residues 193-213 (LIWSLVALIFTFFVPLLSIVT) form a helical membrane-spanning segment. The Cytoplasmic portion of the chain corresponds to 214-239 (CYCCIARKLCAHYQQSGKHNKKLKKS). The chain crosses the membrane as a helical span at residues 240-260 (IKIIFIVVAAFLVSWLPFNTF). Residues 261–284 (KLLAIVSGLQQERYFPSAMLQLGM) are Extracellular-facing. A helical transmembrane segment spans residues 285 to 305 (EVSGPLAFANSCVNPFIYYIF). The Cytoplasmic portion of the chain corresponds to 306 to 360 (DSYIRRAIVHCLCPCLKNYDFGSSTETSDSHLTKALSTFIHAEDFTRRRKRSVSL). Serine 359 is subject to Phosphoserine.

It belongs to the G-protein coupled receptor 1 family. In terms of assembly, interacts with adapter YWHAE; this interaction promotes ER-to-Golgi transport of GPR15. In terms of processing, phosphorylation is necessary for YWHAE binding and efficient surface expression. O-glycosylated. Sialylated O-glycans in the N-terminal tail inhibits binding of GPR15LG. Post-translationally, sulfation is required for efficient binding of GPR15LG.

The protein localises to the cell membrane. Functionally, g protein-coupled receptor that plays an important role in immune homeostasis. Acts via its natural ligand GPR15LG, a chemokine-like polypeptide strongly expressed in gastrointestinal tissues. GPR15-GPR15LG signaling axis regulates intestinal homeostasis and inflammation through the migration of immune cells. Controls thereby the specific homing of T-cells, particularly FOXP3+ regulatory T-cells (Tregs), to the large intestine lamina propria. Also required for skin localization of thymus-derived dendritic epidermal T-cells. Plays an important role in mediating cytoprotective function as well as angiogenesis of thrombomodulin. Mechanistically, preferentially signals through the Gi/o pathway to inhibit adenylate cyclase activity and activate a phosphatidylinositol-calcium second messenger system that regulates the release of Ca(2+) ions from intracellular stores. This is G-protein coupled receptor 15 (GPR15) from Macaca mulatta (Rhesus macaque).